We begin with the raw amino-acid sequence, 1663 residues long: Complement C3 (1663 aa).

Positions 1-24 (MGPASGSQLLVLLLLLASSPLALG) are cleaved as a signal peptide. Ser40 is subject to Phosphoserine. 13 disulfide bridges follow: Cys559–Cys816, Cys626–Cys661, Cys693–Cys720, Cys694–Cys727, Cys707–Cys728, Cys873–Cys1513, Cys1101–Cys1158, Cys1358–Cys1489, Cys1389–Cys1458, Cys1506–Cys1511, Cys1518–Cys1590, Cys1537–Cys1661, and Cys1637–Cys1646. Ser671 is modified (phosphoserine). Positions 693–728 (CCEDGMRDIPMRYSCQRRARLITQGENCIKAFIDCC) constitute an Anaphylatoxin-like domain. Residue Asn939 is glycosylated (N-linked (GlcNAc...) asparagine). Ser968 carries the post-translational modification Phosphoserine. The segment at residues 1010–1013 (CGEQ) is a cross-link (isoglutamyl cysteine thioester (Cys-Gln)). Ser1321 bears the Phosphoserine mark. Residues 1518–1661 (CFMQQSQEKI…FTESMVVYGC (144 aa)) form the NTR domain. Phosphoserine is present on Ser1573. Asn1617 carries an N-linked (GlcNAc...) asparagine glycan. The interval 1634-1659 (AEECQDQKYQKQCEELGAFTESMVVY) is interaction with CFP/properdin.

In terms of assembly, in absence of complement activation, the C3 precursor is first processed by the removal of 4 Arg residues, forming two chains, beta and alpha, linked by a disulfide bond. Complement C3b is composed of complement C3b and complement C3 beta chains that are associated via disulfide bonds. Non-enzymatic component of the C5 convertase, also named C4bC2bC3b, composed of the serine protease complement C2b (C2), complement C3b, as well as complement C4b (C4). Non-enzymatic component of the C5 convertase of the alternative complement pathways composed of the serine protease complement CFB and complement C3b. Interacts with CFP; interaction takes place together with CFB in the alternative complement system and allows the complex to become active. Interacts with CR1 (via Sushi 8 and Sushi 9 domains). Interacts with CFH. As to quaternary structure, interacts with CFH. Interacts with CR2. In terms of assembly, during pregnancy, C3dg exists as a complex (probably a 2:2:2 heterohexamer) with AGT and the proform of PRG2. Interacts with CR2 (via the N-terminal Sushi domains 1 and 2). In terms of processing, C3 precursor is first processed by the removal of 4 Arg residues, forming two chains, beta and alpha, linked by a disulfide bond. During activation of the complement systems, the alpha chain is cleaved into C3a and C3b by the C3 convertase: C3b stays linked to the beta chain, while C3a is released in the plasma. The alpha chain is cleaved by the serine protease complement C2b component of the C3 convertase to generate C3a and C3b following activation by the classical, lectin and GZMK complement systems. The alpha chain is cleaved by CFB component of the C3 convertase to generate C3a and C3b following activation by the alternative complement system. C3a is further processed by carboxypeptidases to release the C-terminal arginine residue generating the acylation stimulating protein (ASP). Levels of ASP are increased in adipocytes in the postprandial period and by insulin and dietary chylomicrons. Post-translationally, complement C3b is rapidly split in two positions by factor I (CFI) and a cofactor (CFH) to form iC3b (inactivated C3b) and C3f which is released. CFI and CFH catalyze proteolytic degradation of already-deposited complement C3b. Then iC3b is slowly cleaved (possibly by CFI) to form C3c (beta chain + alpha' chain fragment 1 + alpha' chain fragment 2), C3dg and C3f. Other proteases produce other fragments such as C3d or C3g. In terms of processing, upon activation, the internal thioester bond reacts with carbohydrate antigens on the target surface to form amide or ester bonds, leading to covalent association with the surface of pathogens. Complement C3b interacts with complement C4b via a thioester linkage. Post-translationally, phosphorylated by FAM20C in the extracellular medium.

The protein localises to the secreted. It localises to the cell surface. Complement activation is inhibited by VSIG4. Functionally, precursor of non-enzymatic components of the classical, alternative, lectin and GZMK complement pathways, which consist in a cascade of proteins that leads to phagocytosis and breakdown of pathogens and signaling that strengthens the adaptive immune system. Non-enzymatic component of C5 convertase. Generated following cleavage by C3 convertase, it covalently attaches to the surface of pathogens, where it acts as an opsonin that marks the surface of antigens for removal. Complement C3b binds covalently via its reactive thioester, to cell surface carbohydrates or immune aggregates. Together with complement C4b, it then recruits the serine protease complement C2b to form the C5 convertase, which cleaves and activate C5, the next component of the complement pathways. In the alternative complement pathway, recruits the serine protease CFB to form the C5 convertase that cleaves and activates C5. Its function is as follows. Mediator of local inflammatory process released following cleavage by C3 convertase. Acts by binding to its receptor, C3AR1, activating G protein-coupled receptor signaling, promoting the phosphorylation, ARRB2-mediated internalization and endocytosis of C3AR1. C3a anaphylatoxin stimulates the activation of immune cells such as mast cells and basophilic leukocytes to release inflammation agents, such as cytokines, chemokines and histamine, which promote inflammation development. Also acts as potent chemoattractant for the migration of macrophages and neutrophils to the inflamed tissues, resulting in neutralization of the inflammatory triggers by multiple ways, such as phagocytosis and generation of reactive oxidants. In terms of biological role, adipogenic hormone that stimulates triglyceride synthesis and glucose transport in adipocytes, regulating fat storage and playing a role in postprandial triglyceride clearance. Appears to stimulate triglyceride synthesis via activation of the PLC, MAPK and AKT signaling pathways. Acts by binding to its receptor, C5AR2, activating G protein-coupled receptor signaling, promoting the phosphorylation, ARRB2-mediated internalization and endocytosis of C5AR2. Functionally, acts as a chemoattractant for neutrophils in chronic inflammation. This chain is Complement C3, found in Mus musculus (Mouse).